The chain runs to 174 residues: Gamma-crystallin C (174 aa).

Beta/gamma crystallin 'Greek key' domains are found at residues 2–40 and 41–83; these read GKITFYEDRGFQGRCYQCSSDCPNLQPYFSRCNSIRVDS and GCWM…CLIS. S-methylcysteine is present on cysteine 23. The segment at 84–87 is connecting peptide; it reads DTSS. Beta/gamma crystallin 'Greek key' domains lie at 88–128 and 129–171; these read HRLR…HVLE and GCWV…RRVV.

This sequence belongs to the beta/gamma-crystallin family.

Functionally, crystallins are the dominant structural components of the vertebrate eye lens. The polypeptide is Gamma-crystallin C (CRYGC) (Bos taurus (Bovine)).